Here is an 896-residue protein sequence, read N- to C-terminus: Pentatricopeptide repeat-containing protein At5g03800 (896 aa).

PPR repeat units lie at residues 113–143 (KTRL…LSSP), 144–178 (TVVS…GLVQ), 180–214 (NEYT…GFLN), 215–247 (SVFV…IPQR), 248–278 (DVAS…MNRV), 284–318 (DSFT…GLMQ), 319–349 (ELSV…MMAQ), 350–380 (DAVT…VTEK), 381–415 (NTIT…GVEL), 416–450 (TDFS…GTAF), 451–481 (NPCI…WPSN), 484–519 (SSKA…KLFL), 520–554 (DEVS…GYFS), 555–585 (DISL…MREH), 586–620 (DVIS…EIKP), 621–653 (DIIT…MKTI), and 659–689 (TTEH…MPVQ). Residues 694-769 (VLRALLDSCR…HPAKSWIIHE (76 aa)) are type E motif. The tract at residues 770-800 (NKIHSFHARDTSHPQEKDIYRGLEILIMECL) is type E(+) motif. A type DYW motif region spans residues 801–896 (KVGYEPNTEY…NGKCSCRDLW (96 aa)).

The protein belongs to the PPR family. PCMP-H subfamily.

Its function is as follows. May play a role in embryogenesis. In Arabidopsis thaliana (Mouse-ear cress), this protein is Pentatricopeptide repeat-containing protein At5g03800 (EMB175).